The sequence spans 171 residues: Major tail tube protein (171 aa).

It localises to the virion. Functionally, forms the virus tail tube. The sequence is that of Major tail tube protein from Serratia marcescens (Serratia marcescens bacteriophage KSP20).